Reading from the N-terminus, the 311-residue chain is 4-hydroxy-tetrahydrodipicolinate synthase (311 aa).

A pyruvate-binding site is contributed by Thr51. The active-site Proton donor/acceptor is the Tyr140. Lys168 serves as the catalytic Schiff-base intermediate with substrate. Position 209 (Ile209) interacts with pyruvate.

It belongs to the DapA family. As to quaternary structure, homotetramer; dimer of dimers.

The protein localises to the cytoplasm. The catalysed reaction is L-aspartate 4-semialdehyde + pyruvate = (2S,4S)-4-hydroxy-2,3,4,5-tetrahydrodipicolinate + H2O + H(+). It participates in amino-acid biosynthesis; L-lysine biosynthesis via DAP pathway; (S)-tetrahydrodipicolinate from L-aspartate: step 3/4. Its function is as follows. Catalyzes the condensation of (S)-aspartate-beta-semialdehyde [(S)-ASA] and pyruvate to 4-hydroxy-tetrahydrodipicolinate (HTPA). This chain is 4-hydroxy-tetrahydrodipicolinate synthase, found in Streptococcus pneumoniae (strain ATCC BAA-255 / R6).